A 506-amino-acid chain; its full sequence is GTPase Der (506 aa).

EngA-type G domains follow at residues P3–L166 and I218–T391. Residues G9–S16, D56–I60, N118–D121, G224–S231, D271–V275, and N336–D339 each bind GTP. The 85-residue stretch at Q392–N476 folds into the KH-like domain.

The protein belongs to the TRAFAC class TrmE-Era-EngA-EngB-Septin-like GTPase superfamily. EngA (Der) GTPase family. Associates with the 50S ribosomal subunit.

In terms of biological role, GTPase that plays an essential role in the late steps of ribosome biogenesis. This chain is GTPase Der, found in Actinobacillus pleuropneumoniae serotype 3 (strain JL03).